The primary structure comprises 421 residues: ATP-dependent RNA helicase RhlB (421 aa).

Residues 9 to 37 (QKFSDFALHPAVIEALEKKGFHNCTPIQA) carry the Q motif motif. One can recognise a Helicase ATP-binding domain in the interval 40-219 (LPLTLEGRDV…FEQMNNAEYV (180 aa)). ATP is bound at residue 53–60 (AQTGTGKT). A DEAD box motif is present at residues 165–168 (DEAD). Residues 245-390 (RLLQTLLEEE…VSKYNPDALM (146 aa)) enclose the Helicase C-terminal domain. A disordered region spans residues 396–421 (PLRLTRARPGNGPRRNGPPRNRRRSG). A compositionally biased stretch (low complexity) spans 403–414 (RPGNGPRRNGPP).

Belongs to the DEAD box helicase family. RhlB subfamily. As to quaternary structure, component of the RNA degradosome, which is a multiprotein complex involved in RNA processing and mRNA degradation.

The protein resides in the cytoplasm. The catalysed reaction is ATP + H2O = ADP + phosphate + H(+). In terms of biological role, DEAD-box RNA helicase involved in RNA degradation. Has RNA-dependent ATPase activity and unwinds double-stranded RNA. The chain is ATP-dependent RNA helicase RhlB from Klebsiella pneumoniae (strain 342).